The primary structure comprises 1314 residues: Tetratricopeptide repeat protein 21A (1314 aa).

19 TPR repeats span residues Ser110–Ser143, Leu214–Asn247, Ala326–Arg359, Met494–Phe527, Asp529–Val561, Pro565–Lys598, Ala616–Thr649, Pro721–Asp754, Ala755–Asp788, Leu790–Val821, Val831–Ile863, Ala883–Asp916, Lys918–His950, Glu951–Asn984, Leu986–Val1018, Pro1022–Gly1055, Glu1195–Cys1228, Arg1230–Ala1262, and Pro1264–Tyr1297.

Belongs to the TTC21 family. Interacts with IFT20. Interacts with IFT52. Interacts with IFT140. Interacts with CEP78; regulating IFT20 stability and localization.

In terms of biological role, intraflagellar transport (IFT)-associated protein required for spermatogenesis. Required for sperm flagellar formation and intraflagellar transport. This Mus musculus (Mouse) protein is Tetratricopeptide repeat protein 21A (Ttc21a).